The chain runs to 1529 residues: MRNSGTPVNIIVGSHVWIEDSDVAWIDGLVEKINGQDVEVQATNGKKITAKLSKIYPKDMEAPAGGVDDMTKLSYLHEPGVLQNLKIRYELNEIYTYTGNILIAINPFQRLPHIYDAHMMQQYKGAPFGELSPHVFAVADVAYRAMINEGKSNSILVSGESGAGKTETTKMLMRYLAYLGGRAVTEGRTVEQQVLESNPVLEAFGNAKTVRNNNSSRFGKFVEIQFDKQGRISGAAVRTYLLERSRVCQISDPERNYHCFYLLCAAPQEELEKYKLGHPKTFHYLNQSKCFELVGISDAHDYIATRRAMDIVGMSEKEQEAIFRVVAAILHLGNVEFTKGKEVDSSVPKDDKSKFHLNTVAELLMCDVKALEDALCKRVMVTPEEVIKRSLDPQSALISRDGLAKTIYSRLFDWLVEKINVSIGQDATSRSLIGVLDIYGFESFKTNSFEQFCINFTNEKLQQHFNQHVFKMEQEEYTKEAIDWSYIEFVDNQDVLDLIEKKPGGIVALLDEACMFPKSTHETFANKLYQTFKTHKRFIKPKLSRTDFAVAHYAGEVQYQSDLFLDKNKDYVIPEHQDLLGASKCPFVVGLFPPLPEETSKSSKFSSIGSRFKLQLQQLMETLNSTEPHYIRCVKPNNLLKPAVFENVNIMQQLRCGGVLEAIRISCAGYPTRKPFFEFINRFGLLYPRALEGNYEEKAAAQKILDNIGLKGYQVGKTKVFLRAGQMAELDARRTMVLSAAAKKIQRRIRTHQAQRRFILLRKATISLQALCRGRLSSKIFDNLRRQAAAVKIQKNARRLHSRKSYKNLHVAALVVQTGLRAMAAHKQFRFRKQTKAATTIQAQFRCHRATLYFKKLKKGVILSQTRWRGKLARRELRQLKMASRETGALKEAKDMLEKKVEELTYRAQLEKRSRVDLEEEKNQEIKKLQSSLEEMRKKVDETNGLLVKEREAAKKAIEEAPPVVTETQVLVEDTQKIEALTEEVEGLKANLEQEKQRADDATRKFDEAQESSEDRKKKLEDTEKKAQQLQESVTRLEEKCNNLESENKVLRQQAVSIAPNKFLSGRSRSILQRGSESGHLSVDARPSLDLHSHSINRRDLSEVDDKPQKSLNEKQQENQELLIRCIVQHLGFQGKRPVTACIIYKCLLQWRSFEVERTSVFDRIIQTIGQAIETQDNNNILAYWLSNASTLLLLLQRTLKASGAAGMAPQRRRSSSATLFGRMTQSFRGTPQGVNLAMINGGVDTLRQVEAKYPALLFKQQLTAYVEKIYGMIRDNLKKEISPLLGLCIQAPRTSRASLVKGASRSVGNTAAQQALIAHWQGIVKSLTNFLNNLKSNHVPPFLVRKVFTQIFSFINVQLFNSLLLRRECCSFSNGEYVKAGLAELEHWCYNATDEYAGSSWDELKHIRQAIGFLVIHQKPKKTLDEISHELCPVLSIQQLYRISTMYWDDKYGTHSVSPDVIANMRVLMTEDSNNAVSNSFLLDDDSSIPFSVDDLSKSMERIEIGDVEPPPLIRENSGFSFLLPCSD.

Residues 11–60 enclose the Myosin N-terminal SH3-like domain; that stretch reads IVGSHVWIEDSDVAWIDGLVEKINGQDVEVQATNGKKITAKLSKIYPKDM. In terms of domain architecture, Myosin motor spans 65–735; sequence GGVDDMTKLS…QMAELDARRT (671 aa). ATP-binding positions include 159–166 and 212–220; these read GESGAGKT and NNNSSRFGK. 4 actin-binding regions span residues 498–532, 534–557, 592–616, and 616–638; these read LIEK…YQTF, THKR…AGEV, FPPL…KLQL, and LQQL…KPNN. IQ domains are found at residues 738-767, 761-790, 786-815, 809-838, 834-863, and 857-886; these read LSAA…ATIS, LRKA…QAAA, RQAA…AALV, LHVA…TKAA, QTKA…GVIL, and LKKG…ASRE. A coiled-coil region spans residues 887–1059; that stretch reads TGALKEAKDM…VLRQQAVSIA (173 aa). Positions 993 to 1027 are enriched in basic and acidic residues; sequence EQEKQRADDATRKFDEAQESSEDRKKKLEDTEKKA. Disordered stretches follow at residues 993-1031 and 1096-1115; these read EQEK…QQLQ and INRR…LNEK. The region spanning 1163–1472 is the Dilute domain; sequence DRIIQTIGQA…IANMRVLMTE (310 aa).

This sequence belongs to the TRAFAC class myosin-kinesin ATPase superfamily. Myosin family. Plant myosin class XI subfamily. In terms of assembly, homodimer.

The protein resides in the cytoplasm. In terms of biological role, myosin heavy chain that is required for the cell cycle-regulated transport of various organelles and proteins for their segregation. Functions by binding with its tail domain to receptor proteins on organelles and exerting force with its N-terminal motor domain against actin filaments, thereby transporting its cargo along polarized actin cables. Involved in trafficking of Golgi stacks, mitochondria and peroxisomes. This is Myosin-11 (XI-E) from Arabidopsis thaliana (Mouse-ear cress).